The chain runs to 156 residues: Protein archease-like (156 aa).

Ca(2+) is bound by residues D25, D155, and I156.

Belongs to the archease family.

Component of the tRNA-splicing ligase complex required to facilitate the enzymatic turnover of catalytic subunit RtcB. Plays an important role in a RNA repair and splicing pathway which controls axon regeneration in response to peripheral (PNS) and central nervous system (CNS) injury, by activating splicing of Xbp1 to promote axon regeneration in response to axotomy. The sequence is that of Protein archease-like from Drosophila melanogaster (Fruit fly).